A 225-amino-acid chain; its full sequence is Uridylate kinase (225 aa).

Asp6 contributes to the Mg(2+) binding site. Position 9–10 (9–10 (GS)) interacts with ATP. Gly44 lines the UMP pocket. ATP contacts are provided by Gly45 and Arg49. Residues Asp66 and 114 to 120 (THPGHTT) contribute to the UMP site. Mg(2+)-binding residues include Thr120 and Asp121. Positions 140, 141, 146, and 149 each coordinate ATP. A UMP-binding site is contributed by Gly179. Ser182 contributes to the Mg(2+) binding site. Ser182 serves as a coordination point for ATP.

It belongs to the UMP kinase family. In terms of assembly, homohexamer; trimer of dimers.

Its subcellular location is the cytoplasm. It carries out the reaction UMP + ATP = UDP + ADP. It functions in the pathway pyrimidine metabolism; CTP biosynthesis via de novo pathway; UDP from UMP (UMPK route): step 1/1. Its activity is regulated as follows. Inhibited by UTP. In terms of biological role, catalyzes the reversible phosphorylation of UMP to UDP, with ATP as the most efficient phosphate donor. This chain is Uridylate kinase (pyrH), found in Pyrococcus furiosus (strain ATCC 43587 / DSM 3638 / JCM 8422 / Vc1).